Here is a 126-residue protein sequence, read N- to C-terminus: C-type natriuretic peptide (126 aa).

An N-terminal signal peptide occupies residues 1 to 23 (MHLSQLLACALLLALLSLRPSEA). A disordered region spans residues 20 to 71 (PSEAKPGAPPKVPRTPSGEEVAEPQAAGGGQKKGDKTPGGGGANLKDDRSRL). The propeptide occupies 24-73 (KPGAPPKVPRTPSGEEVAEPQAAGGGQKKGDKTPGGGGANLKDDRSRLLR). The span at 46-62 (AGGGQKKGDKTPGGGGA) shows a compositional bias: gly residues. An intrachain disulfide couples Cys-110 to Cys-126.

Belongs to the natriuretic peptide family. Degraded by IDE (in vitro).

It is found in the secreted. Functionally, hormone which plays a role in endochondral ossification through regulation of cartilaginous growth plate chondrocytes proliferation and differentiation. May also be vasoactive and natriuretic. Acts by specifically binding and stimulating NPR2 to produce cGMP. Binds the clearance receptor NPR3. This chain is C-type natriuretic peptide (NPPC), found in Bos taurus (Bovine).